The chain runs to 461 residues: Argininosuccinate lyase (461 aa).

It belongs to the lyase 1 family. Argininosuccinate lyase subfamily.

It is found in the cytoplasm. It catalyses the reaction 2-(N(omega)-L-arginino)succinate = fumarate + L-arginine. It participates in amino-acid biosynthesis; L-arginine biosynthesis; L-arginine from L-ornithine and carbamoyl phosphate: step 3/3. This chain is Argininosuccinate lyase, found in Desulfitobacterium hafniense (strain DSM 10664 / DCB-2).